A 54-amino-acid polypeptide reads, in one-letter code: uncharacterized protein (54 aa).

A helical transmembrane segment spans residues 21-43 (SYVVCLYMCGSDCACICVLACVV).

The protein resides in the membrane. This is an uncharacterized protein from Saccharomyces cerevisiae (strain ATCC 204508 / S288c) (Baker's yeast).